A 362-amino-acid chain; its full sequence is 3-dehydroquinate synthase (362 aa).

Residues 72–77, 106–110, 130–131, K142, and K151 contribute to the NAD(+) site; these read SGEQAK, GVVGD, and TT. 3 residues coordinate Zn(2+): E184, H246, and H263.

Belongs to the sugar phosphate cyclases superfamily. Dehydroquinate synthase family. Requires NAD(+) as cofactor. It depends on Co(2+) as a cofactor. The cofactor is Zn(2+).

The protein localises to the cytoplasm. The catalysed reaction is 7-phospho-2-dehydro-3-deoxy-D-arabino-heptonate = 3-dehydroquinate + phosphate. The protein operates within metabolic intermediate biosynthesis; chorismate biosynthesis; chorismate from D-erythrose 4-phosphate and phosphoenolpyruvate: step 2/7. Functionally, catalyzes the conversion of 3-deoxy-D-arabino-heptulosonate 7-phosphate (DAHP) to dehydroquinate (DHQ). The polypeptide is 3-dehydroquinate synthase (Bacillus subtilis (strain 168)).